Consider the following 335-residue polypeptide: Tetraacyldisaccharide 4'-kinase (335 aa).

59–66 lines the ATP pocket; the sequence is TAGGNGKT.

Belongs to the LpxK family.

It catalyses the reaction a lipid A disaccharide + ATP = a lipid IVA + ADP + H(+). Its pathway is glycolipid biosynthesis; lipid IV(A) biosynthesis; lipid IV(A) from (3R)-3-hydroxytetradecanoyl-[acyl-carrier-protein] and UDP-N-acetyl-alpha-D-glucosamine: step 6/6. Transfers the gamma-phosphate of ATP to the 4'-position of a tetraacyldisaccharide 1-phosphate intermediate (termed DS-1-P) to form tetraacyldisaccharide 1,4'-bis-phosphate (lipid IVA). The polypeptide is Tetraacyldisaccharide 4'-kinase (Vibrio vulnificus (strain YJ016)).